Consider the following 344-residue polypeptide: Probable nicotinate-nucleotide adenylyltransferase/Ap4A hydrolase (344 aa).

The interval 1–182 (MIFGGAFDPL…YIHQHNIYLK (182 aa)) is naMN adenylyltransferase. Residues 191-344 (EPRMQHCLRV…LKYVRSLQKN (154 aa)) form an ap4A hydrolase region. An HD domain is found at 193 to 304 (RMQHCLRVGQ…IYLADKLEPM (112 aa)). An ADP-binding site is contributed by His196. Fe cation-binding residues include His196, His225, and Asp226. Residues 226–229 (DLAK), His255, 281–282 (HT), Asp299, and Arg305 each bind ADP. A Fe cation-binding site is contributed by Asp299.

The protein in the N-terminal section; belongs to the NadD family. In the C-terminal section; belongs to the Ap4A hydrolase YqeK family.

It carries out the reaction nicotinate beta-D-ribonucleotide + ATP + H(+) = deamido-NAD(+) + diphosphate. It catalyses the reaction P(1),P(4)-bis(5'-adenosyl) tetraphosphate + H2O = 2 ADP + 2 H(+). The protein operates within cofactor biosynthesis; NAD(+) biosynthesis; deamido-NAD(+) from nicotinate D-ribonucleotide: step 1/1. Catalyzes the reversible adenylation of nicotinate mononucleotide (NaMN) to nicotinic acid adenine dinucleotide (NaAD). In terms of biological role, hydrolyzes diadenosine 5',5'''-P1,P4-tetraphosphate (Ap4A) to yield ADP. The polypeptide is Probable nicotinate-nucleotide adenylyltransferase/Ap4A hydrolase (Mycoplasma pneumoniae (strain ATCC 29342 / M129 / Subtype 1) (Mycoplasmoides pneumoniae)).